The sequence spans 175 residues: uncharacterized protein (175 aa).

Residues 1 to 23 (MILVLLLILIAFLYIYFPSSLNQ) form the signal peptide.

This is an uncharacterized protein from Invertebrate iridescent virus 6 (IIV-6).